Reading from the N-terminus, the 100-residue chain is Large ribosomal subunit protein bL21 (100 aa).

Belongs to the bacterial ribosomal protein bL21 family. Part of the 50S ribosomal subunit. Contacts protein L20.

In terms of biological role, this protein binds to 23S rRNA in the presence of protein L20. This Mycoplasmopsis synoviae (strain 53) (Mycoplasma synoviae) protein is Large ribosomal subunit protein bL21.